Consider the following 249-residue polypeptide: DNA polymerase sliding clamp (249 aa).

It belongs to the PCNA family. As to quaternary structure, homotrimer. The subunits circularize to form a toroid; DNA passes through its center. Replication factor C (RFC) is required to load the toroid on the DNA.

In terms of biological role, sliding clamp subunit that acts as a moving platform for DNA processing. Responsible for tethering the catalytic subunit of DNA polymerase and other proteins to DNA during high-speed replication. In Methanococcus vannielii (strain ATCC 35089 / DSM 1224 / JCM 13029 / OCM 148 / SB), this protein is DNA polymerase sliding clamp.